A 247-amino-acid polypeptide reads, in one-letter code: Segregation and condensation protein A (247 aa).

The protein belongs to the ScpA family. As to quaternary structure, component of a cohesin-like complex composed of ScpA, ScpB and the Smc homodimer, in which ScpA and ScpB bind to the head domain of Smc. The presence of the three proteins is required for the association of the complex with DNA.

It localises to the cytoplasm. Functionally, participates in chromosomal partition during cell division. May act via the formation of a condensin-like complex containing Smc and ScpB that pull DNA away from mid-cell into both cell halves. This chain is Segregation and condensation protein A, found in Lactobacillus gasseri (strain ATCC 33323 / DSM 20243 / BCRC 14619 / CIP 102991 / JCM 1131 / KCTC 3163 / NCIMB 11718 / NCTC 13722 / AM63).